The primary structure comprises 374 residues: DNA integrity scanning protein DisA (374 aa).

The region spanning 20 to 158 (DGLMRASLSA…DGMRRVLEDS (139 aa)) is the DAC domain. ATP contacts are provided by residues Gly-87, Leu-105, and 118–122 (TRHRT).

It belongs to the DisA family. In terms of assembly, homooctamer. Mg(2+) serves as cofactor.

The enzyme catalyses 2 ATP = 3',3'-c-di-AMP + 2 diphosphate. In terms of biological role, participates in a DNA-damage check-point that is active prior to asymmetric division when DNA is damaged. DisA forms globular foci that rapidly scan along the chromosomes during sporulation, searching for lesions. When a lesion is present, DisA pauses at the lesion site. This triggers a cellular response that culminates in a temporary block in sporulation initiation. Its function is as follows. Also has diadenylate cyclase activity, catalyzing the condensation of 2 ATP molecules into cyclic di-AMP (c-di-AMP). c-di-AMP acts as a signaling molecule that couples DNA integrity with progression of sporulation. The rise in c-di-AMP level generated by DisA while scanning the chromosome, operates as a positive signal that advances sporulation; upon encountering a lesion, the DisA focus arrests at the damaged site and halts c-di-AMP synthesis. This chain is DNA integrity scanning protein DisA, found in Streptomyces avermitilis (strain ATCC 31267 / DSM 46492 / JCM 5070 / NBRC 14893 / NCIMB 12804 / NRRL 8165 / MA-4680).